Here is a 404-residue protein sequence, read N- to C-terminus: Putative gustatory receptor 94a (404 aa).

Over 1 to 11 (MDFTSDYAHRR) the chain is Cytoplasmic. The helical transmembrane segment at 12-32 (MVKFLTIILIGFMTVFGLLAN) threads the bilayer. The Extracellular portion of the chain corresponds to 33 to 43 (RYRAGRRERFR). A helical membrane pass occupies residues 44 to 64 (FSKANLAFASLWAIAFSLVYG). Residues 65–133 (RQIYKEYQEG…RLDSRSLYIS (69 aa)) are Cytoplasmic-facing. The chain crosses the membrane as a helical span at residues 134–154 (IVLALVKTVAFPLTIEVAFIL). Residues 155–171 (QQRRQHPEMSLIWTLYR) lie on the Extracellular side of the membrane. Residues 172-192 (LFPLIISNFLNNCYFGAMVVV) form a helical membrane-spanning segment. The Cytoplasmic portion of the chain corresponds to 193 to 260 (KEILYALNRR…HSGKYLTPMS (68 aa)). Residues 261–281 (LSMILSLICHLLGITVGFYSL) form a helical membrane-spanning segment. The Extracellular portion of the chain corresponds to 282 to 296 (YYAIADTLIMGKPYD). The helical transmembrane segment at 297–317 (GLGSLINLVFLSISLAEITLL) threads the bilayer. Topologically, residues 318–376 (THLCNHLLVATRRSAVILQEMNLQHADSRYRQAVHGFTLLVTVTKYQIKPLGLYELDMR) are cytoplasmic. The helical transmembrane segment at 377–397 (LISNVFSAVASFLLILVQADL) threads the bilayer. The Extracellular portion of the chain corresponds to 398-404 (SQRFKMQ).

It belongs to the insect chemoreceptor superfamily. Gustatory receptor (GR) family. Gr22e subfamily. In larvae, is expressed in neurons of the terminal external chemosensory organ.

Its subcellular location is the cell membrane. Probable gustatory receptor which mediates acceptance or avoidance behavior, depending on its substrates. The sequence is that of Putative gustatory receptor 94a (Gr94a) from Drosophila melanogaster (Fruit fly).